Reading from the N-terminus, the 590-residue chain is Major surface protein MspTL (590 aa).

The signal sequence occupies residues Met1 to Ala19.

It is found in the cell outer membrane. Major component of the outer membrane. The protein is Major surface protein MspTL (mspTL) of Treponema lecithinolyticum.